We begin with the raw amino-acid sequence, 625 residues long: Serine/threonine-protein kinase PknB (625 aa).

At 1–331 (MTTPQHLSDR…KQRSTSVARW (331 aa)) the chain is on the cytoplasmic side. In terms of domain architecture, Protein kinase spans 11–274 (YELGEILGFG…TAAEMRADLI (264 aa)). Residues 17–25 (LGFGGMSEV), Lys-40, and 93–95 (EYV) each bind ATP. Asp-138 (proton acceptor) is an active-site residue. ATP is bound by residues 140-143 (KPAN) and Asp-156. Asn-143 and Asp-156 together coordinate Mg(2+). The residue at position 169 (Ser-169) is a Phosphoserine; by autocatalysis. 3 positions are modified to phosphothreonine; by autocatalysis: Thr-171, Thr-173, and Thr-294. Residue Ser-295 is modified to Phosphoserine; by autocatalysis. Residues 302–321 (ADRAGAATQDMPVPRPAGYS) are disordered. At Thr-309 the chain carries Phosphothreonine; by autocatalysis. A helical membrane pass occupies residues 332–352 (LIAVAVLAVLTVVVTVAINMV). The Extracellular segment spans residues 353–625 (GGNPRNVQVP…DAKITLSFAA (273 aa)). PASTA domains lie at 355-421 (NPRN…NVST), 422-489 (GPEQ…VVGA), 490-556 (GPED…RVSK), and 557-625 (GNQF…SFAA). The tract at residues 591–612 (DVRDSGQRTNAVVTQSPSAGTP) is disordered. Over residues 597 to 611 (QRTNAVVTQSPSAGT) the composition is skewed to polar residues.

Belongs to the protein kinase superfamily. Ser/Thr protein kinase family. In terms of assembly, homodimer. In terms of processing, autophosphorylated. Dephosphorylated by PstP.

The protein resides in the cell membrane. It carries out the reaction L-seryl-[protein] + ATP = O-phospho-L-seryl-[protein] + ADP + H(+). The catalysed reaction is L-threonyl-[protein] + ATP = O-phospho-L-threonyl-[protein] + ADP + H(+). Its activity is regulated as follows. By K-252a. Functionally, protein kinase that regulates many aspects of mycobacterial physiology. Is a key component of a signal transduction pathway that regulates cell growth, cell shape and cell division via phosphorylation of target proteins. Probably phosphorylates RseA. The chain is Serine/threonine-protein kinase PknB (pknB) from Mycolicibacterium smegmatis (strain ATCC 700084 / mc(2)155) (Mycobacterium smegmatis).